A 334-amino-acid polypeptide reads, in one-letter code: Anthranilate phosphoribosyltransferase (334 aa).

5-phospho-alpha-D-ribose 1-diphosphate is bound by residues glycine 81, 84–85 (GD), threonine 89, 91–94 (NIST), 109–117 (KHGNRSVSS), and alanine 121. Position 81 (glycine 81) interacts with anthranilate. Serine 93 contributes to the Mg(2+) binding site. Residue asparagine 112 participates in anthranilate binding. Arginine 167 is a binding site for anthranilate. Residues aspartate 225 and glutamate 226 each contribute to the Mg(2+) site.

It belongs to the anthranilate phosphoribosyltransferase family. As to quaternary structure, homodimer. Mg(2+) serves as cofactor.

The catalysed reaction is N-(5-phospho-beta-D-ribosyl)anthranilate + diphosphate = 5-phospho-alpha-D-ribose 1-diphosphate + anthranilate. It functions in the pathway amino-acid biosynthesis; L-tryptophan biosynthesis; L-tryptophan from chorismate: step 2/5. Catalyzes the transfer of the phosphoribosyl group of 5-phosphorylribose-1-pyrophosphate (PRPP) to anthranilate to yield N-(5'-phosphoribosyl)-anthranilate (PRA). The protein is Anthranilate phosphoribosyltransferase of Histophilus somni (strain 2336) (Haemophilus somnus).